An 84-amino-acid polypeptide reads, in one-letter code: MKVTLIAILTRAAVLVLHTTAAEELEESQLMEVSMPDTELAAVDEERLFECSVSCEIEKEGNKDCKKKKCKGGWKCKFNMCVKV.

Residues 1–22 (MKVTLIAILTRAAVLVLHTTAA) form the signal peptide. A propeptide spanning residues 23-47 (EELEESQLMEVSMPDTELAAVDEER) is cleaved from the precursor. 3 disulfide bridges follow: C51–C65, C55–C76, and C70–C81.

It belongs to the neurotoxin 12 (Hwtx-2) family. 02 (Hwtx-2) subfamily. As to expression, expressed by the venom gland.

The protein resides in the secreted. Postsynaptic neurotoxin. In Cyriopagopus hainanus (Chinese bird spider), this protein is U4-theraphotoxin-Hhn1a.